A 341-amino-acid chain; its full sequence is NADH-ubiquinone oxidoreductase chain 2 (341 aa).

The next 10 helical transmembrane spans lie at 8 to 28 (ILFT…NSWL), 61 to 81 (FLTQ…LMLA), 95 to 115 (MIIM…FWFP), 121 to 141 (LTWM…LMLI), 146 to 166 (IKNL…IGGL), 174 to 194 (LMAF…MISE), 195 to 215 (SIWL…TFMF), 238 to 258 (FSLF…GFLP), 273 to 293 (FLLT…LRIC), and 321 to 341 (LIMT…FFML).

This sequence belongs to the complex I subunit 2 family.

Its subcellular location is the mitochondrion inner membrane. The catalysed reaction is a ubiquinone + NADH + 5 H(+)(in) = a ubiquinol + NAD(+) + 4 H(+)(out). Its function is as follows. Core subunit of the mitochondrial membrane respiratory chain NADH dehydrogenase (Complex I) that is believed to belong to the minimal assembly required for catalysis. Complex I functions in the transfer of electrons from NADH to the respiratory chain. The immediate electron acceptor for the enzyme is believed to be ubiquinone. This Drosophila yakuba (Fruit fly) protein is NADH-ubiquinone oxidoreductase chain 2 (mt:ND2).